A 283-amino-acid polypeptide reads, in one-letter code: Protein/nucleic acid deglycase HchA (283 aa).

Zn(2+) is bound by residues His86, Glu91, and His123. Residue Cys185 is the Nucleophile of the active site.

The protein belongs to the peptidase C56 family. HchA subfamily. Homodimer.

The protein localises to the cytoplasm. The catalysed reaction is N(omega)-(1-hydroxy-2-oxopropyl)-L-arginyl-[protein] + H2O = lactate + L-arginyl-[protein] + H(+). The enzyme catalyses N(6)-(1-hydroxy-2-oxopropyl)-L-lysyl-[protein] + H2O = lactate + L-lysyl-[protein] + H(+). It catalyses the reaction S-(1-hydroxy-2-oxopropyl)-L-cysteinyl-[protein] + H2O = lactate + L-cysteinyl-[protein] + H(+). It carries out the reaction N(omega)-(1-hydroxy-2-oxoethyl)-L-arginyl-[protein] + H2O = L-arginyl-[protein] + glycolate + H(+). The catalysed reaction is N(6)-(1-hydroxy-2-oxoethyl)-L-lysyl-[protein] + H2O = glycolate + L-lysyl-[protein] + H(+). The enzyme catalyses S-(1-hydroxy-2-oxoethyl)-L-cysteinyl-[protein] + H2O = glycolate + L-cysteinyl-[protein] + H(+). It catalyses the reaction N(2)-(1-hydroxy-2-oxopropyl)-dGTP + H2O = lactate + dGTP + H(+). It carries out the reaction N(2)-(1-hydroxy-2-oxopropyl)-GTP + H2O = lactate + GTP + H(+). The catalysed reaction is N(2)-(1-hydroxy-2-oxopropyl)-GDP + H2O = lactate + GDP + H(+). The enzyme catalyses N(2)-(1-hydroxy-2-oxopropyl)-GMP + H2O = lactate + GMP + H(+). It catalyses the reaction N(2)-(1-hydroxy-2-oxoethyl)-dGTP + H2O = dGTP + glycolate + H(+). It carries out the reaction N(2)-(1-hydroxy-2-oxoethyl)-GTP + H2O = glycolate + GTP + H(+). The catalysed reaction is N(2)-(1-hydroxy-2-oxoethyl)-GDP + H2O = glycolate + GDP + H(+). The enzyme catalyses N(2)-(1-hydroxy-2-oxoethyl)-GMP + H2O = glycolate + GMP + H(+). It catalyses the reaction an N(2)-(1-hydroxy-2-oxopropyl)-guanosine in RNA + H2O = a guanosine in RNA + lactate + H(+). It carries out the reaction an N(2)-(1-hydroxy-2-oxopropyl)-2'-deoxyguanosine in DNA + H2O = a 2'-deoxyguanosine in DNA + lactate + H(+). The catalysed reaction is an N(2)-(1-hydroxy-2-oxoethyl)-guanosine in RNA + H2O = a guanosine in RNA + glycolate + H(+). The enzyme catalyses an N(2)-(1-hydroxy-2-oxoethyl)-2'-deoxyguanosine in DNA + H2O = a 2'-deoxyguanosine in DNA + glycolate + H(+). In terms of biological role, protein and nucleotide deglycase that catalyzes the deglycation of the Maillard adducts formed between amino groups of proteins or nucleotides and reactive carbonyl groups of glyoxals. Thus, functions as a protein deglycase that repairs methylglyoxal- and glyoxal-glycated proteins, and releases repaired proteins and lactate or glycolate, respectively. Deglycates cysteine, arginine and lysine residues in proteins, and thus reactivates these proteins by reversing glycation by glyoxals. Acts on early glycation intermediates (hemithioacetals and aminocarbinols), preventing the formation of Schiff bases and advanced glycation endproducts (AGE). Also functions as a nucleotide deglycase able to repair glycated guanine in the free nucleotide pool (GTP, GDP, GMP, dGTP) and in DNA and RNA. Is thus involved in a major nucleotide repair system named guanine glycation repair (GG repair), dedicated to reversing methylglyoxal and glyoxal damage via nucleotide sanitization and direct nucleic acid repair. Plays an important role in protecting cells from carbonyl stress. This Escherichia coli O81 (strain ED1a) protein is Protein/nucleic acid deglycase HchA.